Reading from the N-terminus, the 177-residue chain is Large ribosomal subunit protein uL5 (177 aa).

Belongs to the universal ribosomal protein uL5 family. As to quaternary structure, part of the 50S ribosomal subunit; contacts the 5S rRNA and probably tRNA. Forms a bridge to the 30S subunit in the 70S ribosome.

In terms of biological role, this is one of the proteins that bind and probably mediate the attachment of the 5S RNA into the large ribosomal subunit, where it forms part of the central protuberance. In the 70S ribosome it contacts protein S13 of the 30S subunit (bridge B1b), connecting the 2 subunits; this bridge is implicated in subunit movement. May contact the P site tRNA; the 5S rRNA and some of its associated proteins might help stabilize positioning of ribosome-bound tRNAs. This chain is Large ribosomal subunit protein uL5, found in Sulfurisphaera tokodaii (strain DSM 16993 / JCM 10545 / NBRC 100140 / 7) (Sulfolobus tokodaii).